The sequence spans 235 residues: Matrix protein (235 aa).

This sequence belongs to the nucleorhabdovirus type-2 matrix protein family. Homomultimer. Interacts with nucleoprotein and with the cytoplasmic domain of glycoprotein.

It localises to the virion membrane. The protein resides in the host endomembrane system. Its function is as follows. Plays a major role in assembly and budding of virion. Completely covers the ribonucleoprotein coil and keep it in condensed bullet-shaped form. Inhibits viral transcription and stimulates replication. This Colocasia esculenta (Wild taro) protein is Matrix protein (M).